Consider the following 574-residue polypeptide: E3 ubiquitin-protein ligase TRIM23 (574 aa).

The RING-type; degenerate zinc finger occupies 31–76 (CGVCEDVFSLQGDKVPRLLLCGHTVCHDCLTRLPLHGRAIRCPFDR). The B box-type; degenerate zinc-finger motif lies at 122-168 (ESIIRCDEDEAHVASVYCTVCATHLCSDCSQVTHSTKTLAKHRRVPL). A coiled-coil region spans residues 352–379 (RVVLAKQEITRLLETLQKQQQQFTEVAD). The ARF-like stretch occupies residues 390 to 574 (TFTKDNRVHI…LVAAGVLDVA (185 aa)). Residues 411 to 418 (GLDGAGKT), 454 to 458 (DVGGK), and 513 to 516 (NKQD) each bind GTP.

In the C-terminal section; belongs to the small GTPase superfamily. Arf family. Homodimer. Interacts with PSCD1. Interacts with UBE2D2. Interacts with TBK1 (via N-terminal kinase domain) and p62/SQSTM1.

The protein localises to the cytoplasm. Its subcellular location is the endomembrane system. It localises to the golgi apparatus membrane. It is found in the lysosome membrane. The catalysed reaction is S-ubiquitinyl-[E2 ubiquitin-conjugating enzyme]-L-cysteine + [acceptor protein]-L-lysine = [E2 ubiquitin-conjugating enzyme]-L-cysteine + N(6)-ubiquitinyl-[acceptor protein]-L-lysine.. Its pathway is protein modification; protein ubiquitination. In terms of biological role, acts as an E3 ubiquitin-protein ligase. Plays an essential role in autophagy activation during viral infection. Mechanistically, activates TANK-binding kinase 1/TBK1 by facilitating its dimerization and ability to phosphorylate the selective autophagy receptor SQSTM1. In order to achieve this function, TRIM23 mediates 'Lys-27'-linked auto-ubiquitination of its ADP-ribosylation factor (ARF) domain to induce its GTPase activity and its recruitment to autophagosomes. The protein is E3 ubiquitin-protein ligase TRIM23 (Trim23) of Mus musculus (Mouse).